Reading from the N-terminus, the 265-residue chain is tRNA pseudouridine synthase A (265 aa).

The active-site Nucleophile is the aspartate 55. Tyrosine 113 contacts substrate.

Belongs to the tRNA pseudouridine synthase TruA family. Homodimer.

It catalyses the reaction uridine(38/39/40) in tRNA = pseudouridine(38/39/40) in tRNA. Its function is as follows. Formation of pseudouridine at positions 38, 39 and 40 in the anticodon stem and loop of transfer RNAs. The chain is tRNA pseudouridine synthase A from Levilactobacillus brevis (strain ATCC 367 / BCRC 12310 / CIP 105137 / JCM 1170 / LMG 11437 / NCIMB 947 / NCTC 947) (Lactobacillus brevis).